A 200-amino-acid polypeptide reads, in one-letter code: Dephospho-CoA kinase (200 aa).

The 198-residue stretch at 3-200 (VLGLTGSIGM…LSGKPAAATR (198 aa)) folds into the DPCK domain. An ATP-binding site is contributed by 11-16 (GMGKTT).

Belongs to the CoaE family.

The protein localises to the cytoplasm. The enzyme catalyses 3'-dephospho-CoA + ATP = ADP + CoA + H(+). It participates in cofactor biosynthesis; coenzyme A biosynthesis; CoA from (R)-pantothenate: step 5/5. Catalyzes the phosphorylation of the 3'-hydroxyl group of dephosphocoenzyme A to form coenzyme A. The protein is Dephospho-CoA kinase of Brucella abortus (strain 2308).